Here is a 485-residue protein sequence, read N- to C-terminus: NADH-quinone oxidoreductase subunit N (485 aa).

Helical transmembrane passes span 8–28, 35–55, 71–91, 105–125, 127–147, 159–179, 203–223, 235–255, 271–291, 297–317, 326–346, 373–393, 408–430, and 455–475; these read LIAL…MLSI, FLNA…LWFV, GFAM…CTFA, FYLL…ANHL, SLFL…GYAF, YTIL…LVYA, LLAG…LVPF, PAPV…GVVM, VVLA…ALSQ, LLGY…IALQ, VGVY…VVSL, AAVM…LGFI, WWLV…RVAV, and IVVL…QPLI.

It belongs to the complex I subunit 2 family. As to quaternary structure, NDH-1 is composed of 13 different subunits. Subunits NuoA, H, J, K, L, M, N constitute the membrane sector of the complex.

The protein resides in the cell inner membrane. The catalysed reaction is a quinone + NADH + 5 H(+)(in) = a quinol + NAD(+) + 4 H(+)(out). In terms of biological role, NDH-1 shuttles electrons from NADH, via FMN and iron-sulfur (Fe-S) centers, to quinones in the respiratory chain. The immediate electron acceptor for the enzyme in this species is believed to be ubiquinone. Couples the redox reaction to proton translocation (for every two electrons transferred, four hydrogen ions are translocated across the cytoplasmic membrane), and thus conserves the redox energy in a proton gradient. The chain is NADH-quinone oxidoreductase subunit N from Escherichia coli O6:K15:H31 (strain 536 / UPEC).